Here is a 579-residue protein sequence, read N- to C-terminus: Probable receptor-like serine/threonine-protein kinase At5g57670 (579 aa).

At T256 the chain carries Phosphothreonine. Positions F267–I542 constitute a Protein kinase domain. ATP contacts are provided by residues V273 to V281 and K295. Catalysis depends on D392, which acts as the Proton acceptor. S396 bears the Phosphoserine mark. At T432 the chain carries Phosphothreonine.

This sequence belongs to the protein kinase superfamily. Ser/Thr protein kinase family.

It catalyses the reaction L-seryl-[protein] + ATP = O-phospho-L-seryl-[protein] + ADP + H(+). The catalysed reaction is L-threonyl-[protein] + ATP = O-phospho-L-threonyl-[protein] + ADP + H(+). The polypeptide is Probable receptor-like serine/threonine-protein kinase At5g57670 (Arabidopsis thaliana (Mouse-ear cress)).